The sequence spans 288 residues: MRNTSKELHGAASRYAPCDWYYHLPVKQSEKAVDAPPASQIPGLSDPREAPSGHTLGLRRYWVKETDSEYVKLAKQGGRPDLLKHFAPGTTKGSPVAYSLPDWYIHHSKPPTADQRQVPAVSIPDYMVYEEFNPDQATGNFESRMGPFDFDMKTIWQREAEELEKEKKKVRLPAIKSKYPSKVGTPLGHREPAGSKLSFPPIPGQRPSSPTNFSKLISNGYKDEWLQQQADSDKRAPQTPQSSVSSPSPLDAELPADPEAPGDTTEAAESSPLSSAAPPPDSTPVELK.

2 disordered regions span residues 31-52 (KAVD…EAPS) and 179-288 (YPSK…VELK). Residues 206-217 (RPSSPTNFSKLI) are compositionally biased toward polar residues. The span at 221 to 236 (YKDEWLQQQADSDKRA) shows a compositional bias: basic and acidic residues. Composition is skewed to low complexity over residues 237–249 (PQTP…SPSP) and 267–276 (AAESSPLSSA).

This is an uncharacterized protein from Bos taurus (Bovine).